A 154-amino-acid chain; its full sequence is NADPH-dependent 7-cyano-7-deazaguanine reductase (154 aa).

Catalysis depends on Cys-52, which acts as the Thioimide intermediate. The active-site Proton donor is Asp-59. Residues 74–76 (VES) and 93–94 (HE) each bind substrate.

Belongs to the GTP cyclohydrolase I family. QueF type 1 subfamily.

It is found in the cytoplasm. The catalysed reaction is 7-aminomethyl-7-carbaguanine + 2 NADP(+) = 7-cyano-7-deazaguanine + 2 NADPH + 3 H(+). It functions in the pathway tRNA modification; tRNA-queuosine biosynthesis. Catalyzes the NADPH-dependent reduction of 7-cyano-7-deazaguanine (preQ0) to 7-aminomethyl-7-deazaguanine (preQ1). The polypeptide is NADPH-dependent 7-cyano-7-deazaguanine reductase (Sinorhizobium medicae (strain WSM419) (Ensifer medicae)).